Reading from the N-terminus, the 340-residue chain is Ferredoxin--NADP reductase (340 aa).

The FAD site is built by D33, Q41, Y46, A86, F120, D286, and T327.

This sequence belongs to the ferredoxin--NADP reductase type 2 family. In terms of assembly, homodimer. Requires FAD as cofactor.

It catalyses the reaction 2 reduced [2Fe-2S]-[ferredoxin] + NADP(+) + H(+) = 2 oxidized [2Fe-2S]-[ferredoxin] + NADPH. The protein is Ferredoxin--NADP reductase of Rickettsia rickettsii (strain Iowa).